A 652-amino-acid polypeptide reads, in one-letter code: UvrABC system protein C (652 aa).

One can recognise a GIY-YIG domain in the interval 37 to 116; the sequence is KSSGCYLFKD…IKTNKPYFNI (80 aa). One can recognise a UVR domain in the interval 226 to 261; the sequence is DDLEIFLQKKMLQFSNDLDYENAAKIRDQISGLKLL.

This sequence belongs to the UvrC family. As to quaternary structure, interacts with UvrB in an incision complex.

It is found in the cytoplasm. The UvrABC repair system catalyzes the recognition and processing of DNA lesions. UvrC both incises the 5' and 3' sides of the lesion. The N-terminal half is responsible for the 3' incision and the C-terminal half is responsible for the 5' incision. In Prochlorococcus marinus (strain MIT 9312), this protein is UvrABC system protein C.